The primary structure comprises 246 residues: 3'(2'),5'-bisphosphate nucleotidase CysQ (246 aa).

Residues Glu-64, Asp-83, Leu-85, Asp-86, and Asp-205 each contribute to the Mg(2+) site. Residue Glu-64 coordinates substrate. Substrate is bound by residues Leu-85 to Thr-88 and Asp-205.

Belongs to the inositol monophosphatase superfamily. CysQ family. Mg(2+) serves as cofactor.

The protein resides in the cell inner membrane. It catalyses the reaction adenosine 3',5'-bisphosphate + H2O = AMP + phosphate. In terms of biological role, converts adenosine-3',5'-bisphosphate (PAP) to AMP. The polypeptide is 3'(2'),5'-bisphosphate nucleotidase CysQ (Escherichia coli O157:H7).